A 374-amino-acid chain; its full sequence is Pectate lyase 3 (374 aa).

A signal peptide spans 1-22; sequence MKYLLPSAAAGLLLLAAQPTMA. An intrachain disulfide couples Cys93 to Cys176. Ca(2+)-binding residues include Asp150, Asp152, Glu187, and Asp191. The active site involves Arg239. A disulfide bridge connects residues Cys350 and Cys373.

Belongs to the polysaccharide lyase 1 family. PLADES subfamily. Ca(2+) is required as a cofactor.

The protein localises to the secreted. It carries out the reaction Eliminative cleavage of (1-&gt;4)-alpha-D-galacturonan to give oligosaccharides with 4-deoxy-alpha-D-galact-4-enuronosyl groups at their non-reducing ends.. Its pathway is glycan metabolism; pectin degradation; 2-dehydro-3-deoxy-D-gluconate from pectin: step 2/5. Involved in maceration and soft-rotting of plant tissue. The chain is Pectate lyase 3 (pel3) from Pectobacterium carotovorum subsp. carotovorum (Erwinia carotovora subsp. carotovora).